The chain runs to 570 residues: Interleukin-1 receptor accessory protein (570 aa).

The first 20 residues, Met-1 to Ala-20, serve as a signal peptide directing secretion. Ig-like C2-type domains lie at Ser-21–Pro-128, Pro-141–Thr-230, and Pro-242–Lys-348. The Extracellular segment spans residues Ser-21–Thr-367. 5 cysteine pairs are disulfide-bonded: Cys-24/Cys-122, Cys-47/Cys-114, Cys-137/Cys-181, Cys-160/Cys-212, and Cys-266/Cys-332. An N-linked (GlcNAc...) asparagine glycan is attached at Asn-57. The segment at Ile-69–Phe-85 is essential for interaction with PTPRD. Asn-107, Asn-111, and Asn-118 each carry an N-linked (GlcNAc...) asparagine glycan. Residues Asn-196, Asn-209, and Asn-299 are each glycosylated (N-linked (GlcNAc...) asparagine). Residues Val-368–Phe-388 traverse the membrane as a helical segment. The Cytoplasmic segment spans residues Tyr-389 to Val-570. One can recognise a TIR domain in the interval Lys-403–Met-546. Glu-482 is a catalytic residue. The tract at residues Lys-549–Val-570 is disordered. Position 557 is a phosphoserine (Ser-557). The segment covering Asp-558–Val-570 has biased composition (polar residues).

This sequence belongs to the interleukin-1 receptor family. In terms of assembly, the interleukin-36 receptor complex is a heterodimer of IL1RL2 and IL1RAP; the association is inhibited by IL36RN. The interleukin-1 receptor complex is a heterodimer of IL1R1 and IL1RAP. Associates with IL1R2 to form a non-signaling interleukin-1 receptor complex. Isoform 4 interacts with IL1R1 in an interleukin-1-dependent manner. Interacts with IL-33-bound IL1RL1 to form the minimal interleukin-33 signaling complex with a 1:1:1 stoichiometry. Interacts with KIT (independently of stimulation with KITLG/SCF). A mast cell-specific KITLG/SCF-induced interleukin-33 signaling complex contains IL1RL1, IL1RAP, KIT and MYD88. Interacts (via the first immunoglobilin domain) with PTPRD (via the third immunoglobilin domain); induces pre- and postsynaptic differentiation of neurons. Detected in liver, skin, placenta, thymus and lung. Isoform 4 is predominantly expressed in brain. Overexpressed on candidate chronic myeloid leukemia (CML) stem cells, hematopoietic stem cells and mononuclear cells of patients with acute myeloid leukemia (AML). Overexpressed in patients with chronic obstructive pulmonary disease (COPD). Expressed in T-helper 1 (Th1) and T-helper 2 (Th2) cell subsets.

The protein resides in the cell membrane. It localises to the secreted. The catalysed reaction is NAD(+) + H2O = ADP-D-ribose + nicotinamide + H(+). Functionally, coreceptor for IL1RL2 in the IL-36 signaling system. Coreceptor with IL1R1 in the IL-1 signaling system. Associates with IL1R1 bound to IL1B to form the high affinity interleukin-1 receptor complex which mediates interleukin-1-dependent activation of NF-kappa-B and other pathways. Signaling involves the recruitment of adapter molecules such as TOLLIP, MYD88, and IRAK1 or IRAK2 via the respective TIR domains of the receptor/coreceptor subunits. Recruits TOLLIP to the signaling complex. Does not bind to interleukin-1 alone; binding of IL1RN to IL1R1, prevents its association with IL1R1 to form a signaling complex. The cellular response is modulated through a non-signaling association with the membrane IL1R2 decoy receptor. Coreceptor for IL1RL1 in the IL-33 signaling system. Can bidirectionally induce pre- and postsynaptic differentiation of neurons by trans-synaptically binding to PTPRD. May play a role in IL1B-mediated costimulation of IFNG production from T-helper 1 (Th1) cells. In terms of biological role, associates with secreted ligand-bound IL1R2 and increases the affinity of secreted IL1R2 for IL1B; this complex formation may be the dominant mechanism for neutralization of IL1B by secreted/soluble receptors. Enhances the ability of secreted IL1R1 to inhibit IL-33 signaling. Its function is as follows. Unable to mediate canonical IL-1 signaling. Required for Src phosphorylation by IL1B. May be involved in IL1B-potentiated NMDA-induced calcium influx in neurons. This is Interleukin-1 receptor accessory protein (IL1RAP) from Homo sapiens (Human).